The chain runs to 512 residues: FACT complex subunit pob3 (512 aa).

Residues 460 to 504 (LDDEDEEGDEEMEEALSEDEDFQAESESDVAEEYDENAESSDEEG) show a composition bias toward acidic residues. The tract at residues 460–512 (LDDEDEEGDEEMEEALSEDEDFQAESESDVAEEYDENAESSDEEGASGAEGSE) is disordered.

The protein belongs to the SSRP1 family. Forms a stable heterodimer with spt16. The spt16-pob3 dimer weakly associates with multiple molecules of nhp6 to form the FACT complex. Interacts with abo1.

The protein resides in the nucleus. The protein localises to the chromosome. Component of the FACT complex, a general chromatin factor that acts to reorganize nucleosomes. The FACT complex is involved in multiple processes that require DNA as a template such as mRNA elongation, DNA replication and DNA repair. During transcription elongation the FACT complex acts as a histone chaperone that both destabilizes and restores nucleosomal structure. It facilitates the passage of RNA polymerase II and transcription by promoting the dissociation of one histone H2A-H2B dimer from the nucleosome, then subsequently promotes the reestablishment of the nucleosome following the passage of RNA polymerase II. This Schizosaccharomyces pombe (strain 972 / ATCC 24843) (Fission yeast) protein is FACT complex subunit pob3.